The primary structure comprises 70 residues: Sec-independent protein translocase protein TatA (70 aa).

The chain crosses the membrane as a helical span at residues 1–21 (MFGLGGQELILILLIILLLFG). A compositionally biased stretch (basic and acidic residues) spans 50-62 (FNKVVDEPPRKTP). Positions 50–70 (FNKVVDEPPRKTPENSTGSKS) are disordered.

It belongs to the TatA/E family. As to quaternary structure, forms a complex with TatC.

The protein localises to the cell inner membrane. In terms of biological role, part of the twin-arginine translocation (Tat) system that transports large folded proteins containing a characteristic twin-arginine motif in their signal peptide across membranes. TatA could form the protein-conducting channel of the Tat system. This Chlorobium limicola (strain DSM 245 / NBRC 103803 / 6330) protein is Sec-independent protein translocase protein TatA.